The following is a 214-amino-acid chain: Probable transaldolase (214 aa).

Lys83 (schiff-base intermediate with substrate) is an active-site residue.

It belongs to the transaldolase family. Type 3B subfamily.

It is found in the cytoplasm. The enzyme catalyses D-sedoheptulose 7-phosphate + D-glyceraldehyde 3-phosphate = D-erythrose 4-phosphate + beta-D-fructose 6-phosphate. It participates in carbohydrate degradation; pentose phosphate pathway; D-glyceraldehyde 3-phosphate and beta-D-fructose 6-phosphate from D-ribose 5-phosphate and D-xylulose 5-phosphate (non-oxidative stage): step 2/3. In terms of biological role, transaldolase is important for the balance of metabolites in the pentose-phosphate pathway. This chain is Probable transaldolase, found in Geobacter sp. (strain M21).